The primary structure comprises 32 residues: Ovostatin (32 aa).

The segment at residues 27 to 30 is a cross-link (isoglutamyl cysteine thioester (Cys-Gln)); that stretch reads CGEQ.

Belongs to the protease inhibitor I39 (alpha-2-macroglobulin) family. Homotetramer, which consists of two pairs of disulfide-linked chains.

The protein resides in the secreted. Functionally, is able to inhibit all four classes of proteinases by a unique 'trapping' mechanism. This protein has a peptide stretch, called the 'bait region' which contains specific cleavage sites for different proteinases. When a proteinase cleaves the bait region, a conformational change is induced in the protein which traps the proteinase. The entrapped enzyme remains active against low molecular weight substrates (activity against high molecular weight substrates is greatly reduced). Following cleavage in the bait region a thioester bond is hydrolyzed and mediates the covalent binding of the protein to the proteinase. The polypeptide is Ovostatin (Anas platyrhynchos (Mallard)).